A 465-amino-acid polypeptide reads, in one-letter code: Putative F-box protein At1g21990 (465 aa).

The F-box domain occupies 8–54 (RDLISGSPDEILGKILSFLPTHHAATTSVLSKRWRNLLPLVDKLELT).

This is Putative F-box protein At1g21990 from Arabidopsis thaliana (Mouse-ear cress).